Reading from the N-terminus, the 470-residue chain is Uronate isomerase (470 aa).

It belongs to the metallo-dependent hydrolases superfamily. Uronate isomerase family.

It carries out the reaction D-glucuronate = D-fructuronate. It catalyses the reaction aldehydo-D-galacturonate = keto-D-tagaturonate. It participates in carbohydrate metabolism; pentose and glucuronate interconversion. The chain is Uronate isomerase from Vibrio vulnificus (strain CMCP6).